Reading from the N-terminus, the 100-residue chain is Protein RnfH (100 aa).

The protein belongs to the UPF0125 (RnfH) family.

This is Protein RnfH from Pseudomonas paraeruginosa (strain DSM 24068 / PA7) (Pseudomonas aeruginosa (strain PA7)).